We begin with the raw amino-acid sequence, 299 residues long: Tyrosine recombinase XerC (299 aa).

In terms of domain architecture, Core-binding (CB) spans 3-87 (PQCQSYLQQF…AIKQWGEFLL (85 aa)). Positions 108 to 287 (PLPKNIDVDS…DFQHLAKVYD (180 aa)) constitute a Tyr recombinase domain. Residues arginine 147, lysine 171, histidine 239, arginine 242, and histidine 265 contribute to the active site. Tyrosine 274 acts as the O-(3'-phospho-DNA)-tyrosine intermediate in catalysis.

The protein belongs to the 'phage' integrase family. XerC subfamily. Forms a cyclic heterotetrameric complex composed of two molecules of XerC and two molecules of XerD.

It localises to the cytoplasm. In terms of biological role, site-specific tyrosine recombinase, which acts by catalyzing the cutting and rejoining of the recombining DNA molecules. The XerC-XerD complex is essential to convert dimers of the bacterial chromosome into monomers to permit their segregation at cell division. It also contributes to the segregational stability of plasmids. In Shewanella sp. (strain ANA-3), this protein is Tyrosine recombinase XerC.